Reading from the N-terminus, the 56-residue chain is Large ribosomal subunit protein bL32 (56 aa).

The disordered stretch occupies residues Met-1–His-37. Basic residues predominate over residues Lys-7–Arg-16.

This sequence belongs to the bacterial ribosomal protein bL32 family.

The chain is Large ribosomal subunit protein bL32 (rpmF) from Pasteurella multocida (strain Pm70).